The chain runs to 729 residues: Serine/threonine-protein kinase TBK1 (729 aa).

In terms of domain architecture, Protein kinase spans 9–310; the sequence is WLLSDILGQG…ETSDILHRMV (302 aa). Residue 15–23 coordinates ATP; it reads LGQGATANV. K30 participates in a covalent cross-link: Glycyl lysine isopeptide (Lys-Gly) (interchain with G-Cter in ubiquitin). K38 contributes to the ATP binding site. D135 functions as the Proton acceptor in the catalytic mechanism. S172 is modified (phosphoserine; by autocatalysis and IKKB). The Ubiquitin-like domain maps to 309-385; sequence MVIHVFSLQQ…ENPIFVVSRE (77 aa). A Glycyl lysine isopeptide (Lys-Gly) (interchain with G-Cter in ubiquitin) cross-link involves residue K401. Coiled-coil stretches lie at residues 407 to 657 and 658 to 713; these read DLDG…LQET and LPQK…ILER. N6-methyllysine; by SETD4 is present on K607. The interval 621–729 is interaction with AZI2, TANK and TBKBP1; the sequence is RKMLHLRKQL…DGGLRNVDCL (109 aa). Residue K670 forms a Glycyl lysine isopeptide (Lys-Gly) (interchain with G-Cter in ubiquitin) linkage. S716 carries the post-translational modification Phosphoserine.

Belongs to the protein kinase superfamily. Ser/Thr protein kinase family. I-kappa-B kinase subfamily. In terms of assembly, homodimer. Interacts with DDX3X, TIRAP and TRAF2. Part of a ternary complex consisting of TANK, TRAF2 and TBK1. Interacts with AZI2, TANK and TBKBP1; these interactions are mutually exclusive and mediate TBK1 activation. Interacts with GSK3B; this interaction promotes TBK1 self-association and autophosphorylation. Interacts with SIKE1; SIKE1 is associated with TBK1 under physiological condition and dissociated from TBK1 upon viral infection or TLR3 stimulation. Interacts with IRF3, leading to IRF3 phosphorylation. Interacts with RIGI. Interacts with CYLD. Interacts with OPTN and TRAF3. Interacts with SRC. Interacts with the exocyst complex subunit SEC5/EXOC2; this interaction is sufficient to trigger TBK1 activity. Interacts with STING1, leading to STING1 phosphorylation. Interacts with IFIT3 (via N-terminus). Interacts with MAVS; interaction only takes place in the presence of IFIT3 and leads to MAVS phosphorylation. Interacts (via protein kinase domain) with TTLL12 (via TTL domain); the interaction prevents MAVS binding to TBK1. Interacts with TICAM1; this interaction is enhanced in the presence of WDFY1 and leads to TICAM1 phosphorylation. Interacts with TRIM26. Interacts with TRIM23. Interacts with TTC4 and IKBKE. Interacts with HNRNPA2B1. Interacts with DDX3X. Interacts with TRIM14. Interacts with CEP170; efficient complex formation may be dependent on the presence of CCDC61. Interacts with TRAF3IP3. Interacts with HSP90AA1; the interaction mediates TBK1 association with TOMM70. Interacts with TAX1BP1. Interacts with kinase IKBKB; the complex interacts with STAT1, leading to phosphorylation of STAT1 on 'Thr-749' by IKBKB. Interacts with ICOS; this interaction is critical for the maturation of T follicular regulatory cells. Interacts with RNF144B; this interaction prevents TBK1 phosphorylation and subsequent activation. Interacts with ASB8; this interaction promotes TBK1 proteasomal degradation. Forms a ternary complex with ZNF268 and SETD4; the interaction with SETD4 is ZNF268-dependent and leads to TBK1 monomethylation, which enhances its interaction with IRF3 and MAVS. As to quaternary structure, (Microbial infection) Interacts with Borna disease virus (BDV) P protein leading to its phosphorylation. (Microbial infection) Interacts with Ebola virus protein VP35. In terms of assembly, (Microbial infection) Interacts with HCV NS3; this interaction leads to inhibition of cellular antiviral response by blocking necessary interactions between the TBK1 and its substrates IRF3 and IRF7. As to quaternary structure, (Microbial infection) Interacts with human herpesvirus 1 protein ICP34.5. (Microbial infection) Interacts with Zika virus non-structural protein 1/NS1 and non-structural protein 4B/NS4B. In terms of assembly, (Microbial infection) Interacts with SARS-CoV-2 non-structural protein 6; this interaction decreases IRF3 phosphorylation by 57%, which leads to reduced IFN-beta (IFNB) production. Interacts with SARS-CoV-2 helicase; this interaction inhibits TBK1 phosphorylation and decreases IRF3 phosphorylation by 75%, which leads to reduced IFN-beta production. Interacts with SARS-CoV-2 M protein; the interaction promotes TBK1 degradation via 'Lys-48'-linked ubiquitination. As to quaternary structure, (Microbial infection) Interacts with human cytomegalovirus protein UL35; this interaction inhibits type I interferon production. (Microbial infection) Interacts with heartland virus NSs; this interaction antagonizes TBK1 phosphorylation and inhibits TBK1-IRF3 interaction and thus the establishment of an antiviral state. In terms of assembly, (Microbial infection) Interacts (via N-terminus) with Severe fever with thrombocytopenia virus (SFTSV) NSs; this interaction antagonizes TBK1 phosphorylation and sequesters TBK1 in NSs-induced cytoplasmic inclusion bodies thereby inhibiting the IFN responses. Post-translationally, autophosphorylation at Ser-172 activates the kinase, and is an essential step for virus-triggered signaling. Phosphorylated by IKBKB/IKKB at Ser-172. Phosphorylation requires homodimerization and ubiquitination at Lys-30 and Lys-401. Dephosphorylated at Ser-172 by PPM1B and this negatively regulates its role in mediating antiviral response. 'Lys-63'-linked polyubiquitination by MIB1 after RNA virus infection, or by NRDP1 after LPS stimulation at Lys-30 and Lys-401, participates in kinase activation. 'Lys-48'-linked polyubiquitination at Lys-670 by DTX4 leads to proteasomal degradation. 'Lys-48'-linked polyubiquitination by TRAIP also leads to proteasomal degradation. 'Lys-48'-linked polyubiquitination by TRAF7; leading to proteasomal degradation. 'Lys-63'-linked polyubiquitination by RNF128 at Lys-30 and Lys-401 leads to the activation of antiviral responses. 'Lys-48'-linked polyubiquitination after 'lys-33'-linked deubiquitination by USP38 promotes TBK1 degradation. In terms of processing, (Microbial infection) Interaction with SARS-CoV-2 M protein induces 'Lys-48'-linked ubiquitination which leads to proteasomal degradation. Post-translationally, (Microbial infection) Deubiquitinated by Epstein-Barr virus BPLF1 on both 'Lys-48' and 'Lys-63'-linked ubiquitin chains; leading to inhibition of type I interfewron production. Monomethylation at Lys-607 by SETD4 maximizes TBK1 activation and promotes efficient interferon signaling. Ubiquitous with higher expression in testis. Expressed in the ganglion cells, nerve fiber layer and microvasculature of the retina.

The protein resides in the cytoplasm. The catalysed reaction is L-seryl-[protein] + ATP = O-phospho-L-seryl-[protein] + ADP + H(+). It carries out the reaction L-threonyl-[protein] + ATP = O-phospho-L-threonyl-[protein] + ADP + H(+). Its function is as follows. Serine/threonine kinase that plays an essential role in regulating inflammatory responses to foreign agents. Following activation of toll-like receptors by viral or bacterial components, associates with TRAF3 and TANK and phosphorylates interferon regulatory factors (IRFs) IRF3 and IRF7 as well as DDX3X. This activity allows subsequent homodimerization and nuclear translocation of the IRFs leading to transcriptional activation of pro-inflammatory and antiviral genes including IFNA and IFNB. In order to establish such an antiviral state, TBK1 form several different complexes whose composition depends on the type of cell and cellular stimuli. Plays a key role in IRF3 activation: acts by first phosphorylating innate adapter proteins MAVS, STING1 and TICAM1 on their pLxIS motif, leading to recruitment of IRF3, thereby licensing IRF3 for phosphorylation by TBK1. Phosphorylated IRF3 dissociates from the adapter proteins, dimerizes, and then enters the nucleus to induce expression of interferons. Thus, several scaffolding molecules including FADD, TRADD, MAVS, AZI2, TANK or TBKBP1/SINTBAD can be recruited to the TBK1-containing-complexes. Under particular conditions, functions as a NF-kappa-B effector by phosphorylating NF-kappa-B inhibitor alpha/NFKBIA, IKBKB or RELA to translocate NF-Kappa-B to the nucleus. Restricts bacterial proliferation by phosphorylating the autophagy receptor OPTN/Optineurin on 'Ser-177', thus enhancing LC3 binding affinity and antibacterial autophagy. Phosphorylates SMCR8 component of the C9orf72-SMCR8 complex, promoting autophagosome maturation. Phosphorylates ATG8 proteins MAP1LC3C and GABARAPL2, thereby preventing their delipidation and premature removal from nascent autophagosomes. Seems to play a role in energy balance regulation by sustaining a state of chronic, low-grade inflammation in obesity, which leads to a negative impact on insulin sensitivity. Attenuates retroviral budding by phosphorylating the endosomal sorting complex required for transport-I (ESCRT-I) subunit VPS37C. Phosphorylates Borna disease virus (BDV) P protein. Plays an essential role in the TLR3- and IFN-dependent control of herpes virus HSV-1 and HSV-2 infections in the central nervous system. Acts both as a positive and negative regulator of the mTORC1 complex, depending on the context: activates mTORC1 in response to growth factors by catalyzing phosphorylation of MTOR, while it limits the mTORC1 complex by promoting phosphorylation of RPTOR. Acts as a positive regulator of the mTORC2 complex by mediating phosphorylation of MTOR, leading to increased phosphorylation and activation of AKT1. Phosphorylates and activates AKT1. Involved in the regulation of TNF-induced RIPK1-mediated cell death, probably acting via CYLD phosphorylation that in turn controls RIPK1 ubiquitination status. Also participates in the differentiation of T follicular regulatory cells together with the receptor ICOS. This chain is Serine/threonine-protein kinase TBK1, found in Homo sapiens (Human).